A 308-amino-acid chain; its full sequence is Aspartate carbamoyltransferase catalytic subunit (308 aa).

Positions 57 and 58 each coordinate carbamoyl phosphate. Residue Lys86 participates in L-aspartate binding. 3 residues coordinate carbamoyl phosphate: Arg107, His135, and Gln138. Arg167 and Arg228 together coordinate L-aspartate. 2 residues coordinate carbamoyl phosphate: Leu267 and Pro268.

The protein belongs to the aspartate/ornithine carbamoyltransferase superfamily. ATCase family. Heterooligomer of catalytic and regulatory chains.

The enzyme catalyses carbamoyl phosphate + L-aspartate = N-carbamoyl-L-aspartate + phosphate + H(+). The protein operates within pyrimidine metabolism; UMP biosynthesis via de novo pathway; (S)-dihydroorotate from bicarbonate: step 2/3. In terms of biological role, catalyzes the condensation of carbamoyl phosphate and aspartate to form carbamoyl aspartate and inorganic phosphate, the committed step in the de novo pyrimidine nucleotide biosynthesis pathway. The polypeptide is Aspartate carbamoyltransferase catalytic subunit (Methanococcoides burtonii (strain DSM 6242 / NBRC 107633 / OCM 468 / ACE-M)).